Reading from the N-terminus, the 341-residue chain is uncharacterized protein (341 aa).

The next 3 membrane-spanning stretches (helical) occupy residues 6–26 (IIAG…TTLW), 63–83 (LLLC…WVLI), and 137–157 (AQGL…LSAV).

It is found in the cell membrane. This is an uncharacterized protein from Bacillus subtilis (strain 168).